A 97-amino-acid polypeptide reads, in one-letter code: MSSEGELGIEVVYALPGQQTVLRVELPAGSTAGDALNASGVLERHPEIDLTRQSVGVFGQIVGLDTPLHNGDRVEVYRPLQVDPKEARKRRAARKAS.

It belongs to the UPF0125 (RnfH) family.

The chain is Protein RnfH from Halorhodospira halophila (strain DSM 244 / SL1) (Ectothiorhodospira halophila (strain DSM 244 / SL1)).